Here is a 367-residue protein sequence, read N- to C-terminus: MKEPLDLSKYSIRTDLAVEAHQMLQESQEEQKGIQGVIVKEREEEGTIITKVTIDEAASEAMGKKPGNYLTLEVQGIRQQDTELQQKVERIFAKEFSCFLEEVGVTKEASCLIVGLGNWNVTPDALGPIVVENVLVTRHLFQLQPESVEEGFRPVSAIRPGVMGITGIETSDVIYGIIEKTNPDFVIAIDALAARSIERVNSTIQISDTGIHPGSGVGNKRKELSKDTLGIPVIAIGVPTVVDAVSITSDTIDFILKHFGREMKEGNKPSRSLLPAGFSFGEKKKLTEEDMPDEKSRNMFLGAVGTLEEEEKRRLIYEVLSPLGHNLMVTPKEVDTFIEDMANVIASGLNAALHHQIDQDNTGAYTH.

A propeptide spanning residues 1–15 (MKEPLDLSKYSIRTD) is cleaved from the precursor.

The protein belongs to the peptidase A25 family. Homotetramer. Autoproteolytically processed. The inactive tetrameric zymogen termed p46 autoprocesses to a smaller form termed p41, which is active only during spore germination.

It carries out the reaction Endopeptidase action with P4 Glu or Asp, P1 preferably Glu &gt; Asp, P1' hydrophobic and P2' Ala.. Functionally, initiates the rapid degradation of small, acid-soluble proteins during spore germination. The polypeptide is Germination protease (Bacillus cereus (strain B4264)).